A 142-amino-acid chain; its full sequence is Large ribosomal subunit protein uL13 (142 aa).

The protein belongs to the universal ribosomal protein uL13 family. In terms of assembly, part of the 50S ribosomal subunit.

Its function is as follows. This protein is one of the early assembly proteins of the 50S ribosomal subunit, although it is not seen to bind rRNA by itself. It is important during the early stages of 50S assembly. The chain is Large ribosomal subunit protein uL13 from Coxiella burnetii (strain CbuK_Q154) (Coxiella burnetii (strain Q154)).